The following is a 393-amino-acid chain: Cyclic GMP-AMP synthase-like receptor 1 (393 aa).

Mg(2+)-binding residues include glutamate 89, aspartate 91, and aspartate 205. 89 to 91 (EFD) contacts ATP. Residues aspartate 205 and 251–258 (RASFYEAE) contribute to the GTP site. ATP contacts are provided by residues 255–258 (YEAE), lysine 276, and 289–293 (SYHIK).

Belongs to the mab-21 family. The cofactor is Mg(2+). It depends on Mn(2+) as a cofactor.

The enzyme catalyses GTP + ATP = 3',2'-cGAMP + 2 diphosphate. It catalyses the reaction GTP + ATP = pppA(2'-5')pG + diphosphate. The catalysed reaction is pppA(2'-5')pG = 3',2'-cGAMP + diphosphate. Its activity is regulated as follows. The enzyme activity is specifically activated by double-stranded RNA (dsRNA). Recognizes long dsRNA (&gt;30 bp) with no preference for 5' RNA phosphorylation. In terms of biological role, nucleotidyltransferase that catalyzes the formation of cyclic GMP-AMP (3',2'-cGAMP) from ATP and GTP and plays a key role in innate immunity. Synthesizes 3',2'-cGAMP in a two-step reaction through production of the linear intermediate pppA(2'-5')pG. Acts as a key sensor of double-stranded RNA (dsRNA), the presence of dsRNA in the cytoplasm being a danger signal that triggers the immune responses. Directly binds dsRNA longer than 35 bp, activating the nucleotidyltransferase activity, leading to synthesis of 3',2'-cGAMP, a second messenger that binds to and activates Sting, thereby triggering the antiviral immune response via activation of the NF-kappa-B transcription factor Rel (Relish). The sequence is that of Cyclic GMP-AMP synthase-like receptor 1 from Drosophila simulans (Fruit fly).